A 358-amino-acid chain; its full sequence is tRNA-specific 2-thiouridylase MnmA (358 aa).

ATP contacts are provided by residues 8-15 (GLSGGVDS) and L34. C95 acts as the Nucleophile in catalysis. A disulfide bridge connects residues C95 and C194. G120 provides a ligand contact to ATP. The interval 144 to 146 (KDQ) is interaction with tRNA. C194 (cysteine persulfide intermediate) is an active-site residue. The segment at 299–300 (RY) is interaction with tRNA.

Belongs to the MnmA/TRMU family.

The protein localises to the cytoplasm. The catalysed reaction is S-sulfanyl-L-cysteinyl-[protein] + uridine(34) in tRNA + AH2 + ATP = 2-thiouridine(34) in tRNA + L-cysteinyl-[protein] + A + AMP + diphosphate + H(+). In terms of biological role, catalyzes the 2-thiolation of uridine at the wobble position (U34) of tRNA, leading to the formation of s(2)U34. In Synechocystis sp. (strain ATCC 27184 / PCC 6803 / Kazusa), this protein is tRNA-specific 2-thiouridylase MnmA.